The sequence spans 381 residues: Chaperone protein DnaJ (381 aa).

Residues 5 to 70 enclose the J domain; that stretch reads DYYEVLGVSR…DKKAAYDRYG (66 aa). The CR-type zinc-finger motif lies at 140–218; that stretch reads GVQKTINVPA…CHGAGRVEKE (79 aa). Zn(2+) contacts are provided by Cys-153, Cys-156, Cys-170, Cys-173, Cys-192, Cys-195, Cys-206, and Cys-209. 4 CXXCXGXG motif repeats span residues 153–160, 170–177, 192–199, and 206–213; these read CDACKGTG, CPTCSGMG, CPTCNGMG, and CKVCHGAG.

It belongs to the DnaJ family. As to quaternary structure, homodimer. Zn(2+) serves as cofactor.

The protein resides in the cytoplasm. Its function is as follows. Participates actively in the response to hyperosmotic and heat shock by preventing the aggregation of stress-denatured proteins and by disaggregating proteins, also in an autonomous, DnaK-independent fashion. Unfolded proteins bind initially to DnaJ; upon interaction with the DnaJ-bound protein, DnaK hydrolyzes its bound ATP, resulting in the formation of a stable complex. GrpE releases ADP from DnaK; ATP binding to DnaK triggers the release of the substrate protein, thus completing the reaction cycle. Several rounds of ATP-dependent interactions between DnaJ, DnaK and GrpE are required for fully efficient folding. Also involved, together with DnaK and GrpE, in the DNA replication of plasmids through activation of initiation proteins. The chain is Chaperone protein DnaJ from Cereibacter sphaeroides (strain KD131 / KCTC 12085) (Rhodobacter sphaeroides).